A 234-amino-acid chain; its full sequence is MKIIRVQDQLEGGKVAFSLLKESLAEGATTLGLATGSTPITFYQELVNSDLDCSALTSINLDEYVGLPVENDQSYDYFMRDQLFNAKPFKESFLPNGLADDLEAEVKRYDQVIAEHPIDFQILGIGRNGHIGFNEPGTSFAEKTHVVDLQASTIEANSRFFASIDDVPKQAISMGIASIMASKMIVLLAFGKEKAAAIKGMVSGPVTEALPASVLQQHDNVVVIIDEAAASELD.

D62 (proton acceptor; for enolization step) is an active-site residue. N128 functions as the For ring-opening step in the catalytic mechanism. The Proton acceptor; for ring-opening step role is filled by H130. E135 (for ring-opening step) is an active-site residue.

The protein belongs to the glucosamine/galactosamine-6-phosphate isomerase family. NagB subfamily.

It catalyses the reaction alpha-D-glucosamine 6-phosphate + H2O = beta-D-fructose 6-phosphate + NH4(+). It functions in the pathway amino-sugar metabolism; N-acetylneuraminate degradation; D-fructose 6-phosphate from N-acetylneuraminate: step 5/5. In terms of biological role, catalyzes the reversible isomerization-deamination of glucosamine 6-phosphate (GlcN6P) to form fructose 6-phosphate (Fru6P) and ammonium ion. The polypeptide is Glucosamine-6-phosphate deaminase (Streptococcus equi subsp. zooepidemicus (strain MGCS10565)).